Consider the following 884-residue polypeptide: Formin-like protein 11 (884 aa).

An N-terminal signal peptide occupies residues Met-1–Cys-18. A disordered region spans residues Ala-89–Glu-143. Pro residues-rich tracts occupy residues Trp-97–Asn-107 and Ala-115–Pro-126. A helical membrane pass occupies residues Ile-158 to Gly-178. Disordered regions lie at residues Ser-307–Lys-384, Ser-416–Pro-469, and Met-512–Leu-532. Low complexity predominate over residues Ser-329–Ser-343. Residues Phe-346–Arg-358 show a composition bias toward basic and acidic residues. 2 stretches are compositionally biased toward pro residues: residues Ala-367–Pro-379 and Gln-425–Gln-436. Residues Leu-461–Arg-884 form the FH2 domain.

The protein belongs to the formin-like family. Class-I subfamily.

The protein localises to the membrane. Its function is as follows. Might be involved in the organization and polarity of the actin cytoskeleton. The chain is Formin-like protein 11 (FH11) from Arabidopsis thaliana (Mouse-ear cress).